Here is a 137-residue protein sequence, read N- to C-terminus: Putative pre-16S rRNA nuclease (137 aa).

The protein belongs to the YqgF nuclease family.

The protein resides in the cytoplasm. Its function is as follows. Could be a nuclease involved in processing of the 5'-end of pre-16S rRNA. The chain is Putative pre-16S rRNA nuclease from Bacillus cereus (strain AH187).